The sequence spans 209 residues: Type III pantothenate kinase (209 aa).

An ATP-binding site is contributed by 5–12 (DIGNSNAN). Substrate-binding positions include Y68 and 72–75 (GIDR). The active-site Proton acceptor is D74. D89 lines the K(+) pocket. S92 is a binding site for ATP. T144 lines the substrate pocket.

Belongs to the type III pantothenate kinase family. Homodimer. The cofactor is NH4(+). K(+) serves as cofactor.

The protein resides in the cytoplasm. It catalyses the reaction (R)-pantothenate + ATP = (R)-4'-phosphopantothenate + ADP + H(+). Its pathway is cofactor biosynthesis; coenzyme A biosynthesis; CoA from (R)-pantothenate: step 1/5. Functionally, catalyzes the phosphorylation of pantothenate (Pan), the first step in CoA biosynthesis. The protein is Type III pantothenate kinase of Campylobacter jejuni (strain RM1221).